The primary structure comprises 429 residues: Formate-dependent phosphoribosylglycinamide formyltransferase (429 aa).

N(1)-(5-phospho-beta-D-ribosyl)glycinamide is bound by residues 26–27 (EL) and E86. ATP is bound by residues R118, K159, 199 to 202 (EEHI), and E207. Residues 123-319 (ETLAREAKVP…EFGLHLRAVL (197 aa)) enclose the ATP-grasp domain. The Mg(2+) site is built by E276 and E288. Residues D295, K375, and 382–383 (RR) contribute to the N(1)-(5-phospho-beta-D-ribosyl)glycinamide site.

This sequence belongs to the PurK/PurT family. Homodimer.

It catalyses the reaction N(1)-(5-phospho-beta-D-ribosyl)glycinamide + formate + ATP = N(2)-formyl-N(1)-(5-phospho-beta-D-ribosyl)glycinamide + ADP + phosphate + H(+). The protein operates within purine metabolism; IMP biosynthesis via de novo pathway; N(2)-formyl-N(1)-(5-phospho-D-ribosyl)glycinamide from N(1)-(5-phospho-D-ribosyl)glycinamide (formate route): step 1/1. Involved in the de novo purine biosynthesis. Catalyzes the transfer of formate to 5-phospho-ribosyl-glycinamide (GAR), producing 5-phospho-ribosyl-N-formylglycinamide (FGAR). Formate is provided by PurU via hydrolysis of 10-formyl-tetrahydrofolate. This Thermococcus kodakarensis (strain ATCC BAA-918 / JCM 12380 / KOD1) (Pyrococcus kodakaraensis (strain KOD1)) protein is Formate-dependent phosphoribosylglycinamide formyltransferase.